We begin with the raw amino-acid sequence, 463 residues long: tRNA modification GTPase MnmE (463 aa).

The (6S)-5-formyl-5,6,7,8-tetrahydrofolate site is built by arginine 26, glutamate 88, and arginine 127. The 160-residue stretch at 224-383 folds into the TrmE-type G domain; that stretch reads GLATAIIGRP…LEQRIAKMFF (160 aa). Position 234 (asparagine 234) interacts with K(+). Residues 234–239, 253–259, and 278–281 each bind GTP; these read NVGKSS, TDVAGTT, and DTAG. Residue serine 238 coordinates Mg(2+). K(+) contacts are provided by threonine 253, valine 255, and threonine 258. Threonine 259 contributes to the Mg(2+) binding site. Lysine 463 lines the (6S)-5-formyl-5,6,7,8-tetrahydrofolate pocket.

Belongs to the TRAFAC class TrmE-Era-EngA-EngB-Septin-like GTPase superfamily. TrmE GTPase family. Homodimer. Heterotetramer of two MnmE and two MnmG subunits. Requires K(+) as cofactor.

The protein localises to the cytoplasm. Its function is as follows. Exhibits a very high intrinsic GTPase hydrolysis rate. Involved in the addition of a carboxymethylaminomethyl (cmnm) group at the wobble position (U34) of certain tRNAs, forming tRNA-cmnm(5)s(2)U34. The polypeptide is tRNA modification GTPase MnmE (Lactiplantibacillus plantarum (strain ATCC BAA-793 / NCIMB 8826 / WCFS1) (Lactobacillus plantarum)).